The following is a 248-amino-acid chain: Myelin protein P0 (248 aa).

The signal sequence occupies residues 1–29 (MAPGAPSSSPSPILAALLFSSLVLSPAQA). The 114-residue stretch at 30–143 (IVVYTDKEVY…DIVGKTSQVT (114 aa)) folds into the Ig-like V-type domain. At 30–153 (IVVYTDKEVY…LYVFEKVPTR (124 aa)) the chain is on the extracellular side. Cysteine 50 and cysteine 127 are oxidised to a cystine. An N-linked (GlcNAc...) (complex) asparagine glycan is attached at asparagine 122. The chain crosses the membrane as a helical span at residues 154 to 179 (YGVVLGAVIGGVLGVVLLVLLLFYVV). The Cytoplasmic segment spans residues 180–248 (RYCWLRRQAA…GLGESRKDKK (69 aa)). A Phosphoserine; by PKC modification is found at serine 210. Positions 222–248 (MLDHSRSTKAASEKKAKGLGESRKDKK) are disordered. Residues 224–248 (DHSRSTKAASEKKAKGLGESRKDKK) are compositionally biased toward basic and acidic residues. Phosphoserine is present on residues serine 226 and serine 228. Phosphoserine; by PKC is present on residues serine 233 and serine 243.

It belongs to the myelin P0 protein family. In terms of assembly, homodimer and homotetramer. In terms of processing, N-glycosylated; contains sulfate-substituted glycan.

Its subcellular location is the cell membrane. Its function is as follows. Is an adhesion molecule necessary for normal myelination in the peripheral nervous system. It mediates adhesion between adjacent myelin wraps and ultimately drives myelin compaction. This is Myelin protein P0 (MPZ) from Equus caballus (Horse).